The chain runs to 465 residues: Probable glycine dehydrogenase (decarboxylating) subunit 1 (465 aa).

The protein belongs to the GcvP family. N-terminal subunit subfamily. The glycine cleavage system is composed of four proteins: P, T, L and H. In this organism, the P 'protein' is a heterodimer of two subunits.

The catalysed reaction is N(6)-[(R)-lipoyl]-L-lysyl-[glycine-cleavage complex H protein] + glycine + H(+) = N(6)-[(R)-S(8)-aminomethyldihydrolipoyl]-L-lysyl-[glycine-cleavage complex H protein] + CO2. In terms of biological role, the glycine cleavage system catalyzes the degradation of glycine. The P protein binds the alpha-amino group of glycine through its pyridoxal phosphate cofactor; CO(2) is released and the remaining methylamine moiety is then transferred to the lipoamide cofactor of the H protein. This Aeropyrum pernix (strain ATCC 700893 / DSM 11879 / JCM 9820 / NBRC 100138 / K1) protein is Probable glycine dehydrogenase (decarboxylating) subunit 1.